Here is a 213-residue protein sequence, read N- to C-terminus: Pyrrolidone-carboxylate peptidase (213 aa).

Residues E78, C141, and H165 contribute to the active site.

The protein belongs to the peptidase C15 family. Homotetramer.

It localises to the cytoplasm. The enzyme catalyses Release of an N-terminal pyroglutamyl group from a polypeptide, the second amino acid generally not being Pro.. Removes 5-oxoproline from various penultimate amino acid residues except L-proline. This Alkaliphilus oremlandii (strain OhILAs) (Clostridium oremlandii (strain OhILAs)) protein is Pyrrolidone-carboxylate peptidase.